A 1409-amino-acid polypeptide reads, in one-letter code: DNA-directed RNA polymerase subunit beta' (1409 aa).

Positions 70, 72, 85, and 88 each coordinate Zn(2+). Positions 458, 460, and 462 each coordinate Mg(2+). Positions 813, 887, 894, and 897 each coordinate Zn(2+).

Belongs to the RNA polymerase beta' chain family. The RNAP catalytic core consists of 2 alpha, 1 beta, 1 beta' and 1 omega subunit. When a sigma factor is associated with the core the holoenzyme is formed, which can initiate transcription. It depends on Mg(2+) as a cofactor. Zn(2+) is required as a cofactor.

It carries out the reaction RNA(n) + a ribonucleoside 5'-triphosphate = RNA(n+1) + diphosphate. Functionally, DNA-dependent RNA polymerase catalyzes the transcription of DNA into RNA using the four ribonucleoside triphosphates as substrates. This chain is DNA-directed RNA polymerase subunit beta', found in Delftia acidovorans (strain DSM 14801 / SPH-1).